The primary structure comprises 383 residues: Creatine kinase, testis isozyme (383 aa).

Residues 14 to 100 (KRLSPEEEFP…LDPIIEDRHG (87 aa)) form the Phosphagen kinase N-terminal domain. Over residues 99 to 112 (HGGYKPTDKHKTDL) the composition is skewed to basic and acidic residues. Positions 99–119 (HGGYKPTDKHKTDLNPDNLKG) are disordered. The Phosphagen kinase C-terminal domain maps to 127-369 (YVISSRVRTG…KLLVEMEKKL (243 aa)). ATP contacts are provided by residues 130–134 (SSRVR), His193, Arg238, Arg294, 322–327 (RGTGGV), and Asp337.

The protein belongs to the ATP:guanido phosphotransferase family. As to expression, exists in many tissues, but preferentially in testis.

It carries out the reaction creatine + ATP = N-phosphocreatine + ADP + H(+). Reversibly catalyzes the transfer of phosphate between ATP and various phosphogens (e.g. creatine phosphate). Creatine kinase isoenzymes play a central role in energy transduction in tissues with large, fluctuating energy demands, such as skeletal muscle, heart, brain and spermatozoa. This is Creatine kinase, testis isozyme (tck1) from Oncorhynchus mykiss (Rainbow trout).